Consider the following 471-residue polypeptide: Putative multidrug resistance protein MdtD (471 aa).

Over 1–11 the chain is Periplasmic; sequence MTDLPDSTRWQ. A helical membrane pass occupies residues 12-32; sequence LWIVAFGFFMQSLDTTIVNTA. Topologically, residues 33 to 48 are cytoplasmic; the sequence is LPSMAQSLGESPLHMH. Residues 49–69 traverse the membrane as a helical segment; the sequence is MVIVSYVLTVAVMLPASGWLA. Residues 70–76 lie on the Periplasmic side of the membrane; it reads DKVGVRN. The chain crosses the membrane as a helical span at residues 77 to 97; it reads IFFTAIVLFTLGSLFCALSGT. Residues 98–101 are Cytoplasmic-facing; sequence LNEL. The helical transmembrane segment at 102–124 threads the bilayer; it reads LLARALQGVGGAMMVPVGRLTVM. Over 125–137 the chain is Periplasmic; that stretch reads KIVPREQYMAAMT. A helical membrane pass occupies residues 138 to 158; the sequence is FVTLPGQVGPLLGPALGGLLV. The Cytoplasmic segment spans residues 159–164; sequence EYASWH. Residues 165–185 traverse the membrane as a helical segment; the sequence is WIFLINIPVGIIGAIATLMLM. Topologically, residues 186–196 are periplasmic; sequence PNYTMQTRRFD. The helical transmembrane segment at 197-217 threads the bilayer; sequence LSGFLLLAVGMAVLTLALDGS. The Cytoplasmic segment spans residues 218–224; it reads KGTGLSP. Residues 225–245 form a helical membrane-spanning segment; the sequence is LAIAGLVAVGVVALVLYLLHA. The Periplasmic portion of the chain corresponds to 246–262; the sequence is RNNNRALFSLKLFRTRT. Residues 263–283 traverse the membrane as a helical segment; that stretch reads FSLGLAGSFAGRIGSGMLPFM. At 284-285 the chain is on the cytoplasmic side; that stretch reads TP. The helical transmembrane segment at 286–306 threads the bilayer; the sequence is VFLQIGLGFSPFHAGLMMIPM. The Periplasmic segment spans residues 307–341; the sequence is VLGSMGMKRIVVQVVNRFGYRRVLVATTLGLSLVT. Residues 342–362 traverse the membrane as a helical segment; that stretch reads LLFMTTALLGWYYVLPFVLFL. The Cytoplasmic segment spans residues 363-395; it reads QGMVNSTRFSSMNTLTLKDLPDNLASSGNSLLS. Residues 396 to 416 traverse the membrane as a helical segment; sequence MIMQLSMSIGVTIAGLLLGLF. Residues 417-430 are Periplasmic-facing; sequence GSQHVSIDSGTTQT. A helical transmembrane segment spans residues 431 to 451; sequence VFMYTWLSMALIIALPAFIFA. Residues 452–471 lie on the Cytoplasmic side of the membrane; sequence RVPNDTHQNVAISRRKRSAQ.

Belongs to the major facilitator superfamily. TCR/Tet family.

Its subcellular location is the cell inner membrane. The polypeptide is Putative multidrug resistance protein MdtD (Escherichia coli (strain 55989 / EAEC)).